Here is a 579-residue protein sequence, read N- to C-terminus: Vitamin B6 transporter TPN1 (579 aa).

Over 1–98 the chain is Cytoplasmic; that stretch reads MNRDNMDTTK…LHVAGLWLSA (98 aa). The helical transmembrane segment at 99–119 threads the bilayer; sequence TGGLSSMSSFLLGPLLFGLSF. The Extracellular portion of the chain corresponds to 120 to 122; that stretch reads RES. A helical transmembrane segment spans residues 123–143; that stretch reads VASSLISVTIGCLIAAYCSIM. Residues 144–157 are Cytoplasmic-facing; sequence GPQSGCRQMVTARY. A helical transmembrane segment spans residues 158–178; that stretch reads LFGWWFVKLVALASIIGVMGW. At 179–198 the chain is on the extracellular side; that stretch reads SVVNSVVGGEMLAAISNDKV. The chain crosses the membrane as a helical span at residues 199–219; the sequence is PLWVGIVIVTVCSFLVAIFGI. At 220–221 the chain is on the cytoplasmic side; sequence KQ. Residues 222–242 form a helical membrane-spanning segment; the sequence is VIKVETYLSVPVLTAFLLLYI. Topologically, residues 243 to 274 are extracellular; that stretch reads SSSDKYSFVNAYVSKGNLDSSTRKGNWMSFFS. Residues 275–295 form a helical membrane-spanning segment; it reads LCYSITATWGSITADYYILFP. Over 296 to 302 the chain is Cytoplasmic; that stretch reads EDTPYIQ. Residues 303–323 form a helical membrane-spanning segment; the sequence is IFCLTFFGTFLPTCFVGILGL. Residues 324 to 362 lie on the Extracellular side of the membrane; it reads LLASVAMSYKPWSVEYDSHGMGGLLWAGFQRWNGFGKFC. Residues 363-383 form a helical membrane-spanning segment; the sequence is VVVLVFSLVSNNIINTYSAAF. The Cytoplasmic segment spans residues 384–394; that stretch reads SIQLSSVFCAK. Residues 395-415 form a helical membrane-spanning segment; it reads IPRWFWSIVCTIICLVCALIG. Residues 416–421 are Extracellular-facing; it reads RNHFST. A helical membrane pass occupies residues 422–442; it reads ILGNFLPMIGYWISMYFILLF. The Cytoplasmic segment spans residues 443–519; the sequence is EENLVFRRFF…EVLTHGYAAT (77 aa). A helical membrane pass occupies residues 520–540; it reads FAFIVGVAGVVVGMAQAYWIG. At 541-545 the chain is on the extracellular side; sequence PIAAK. Residues 546–566 form a helical membrane-spanning segment; it reads FGEYGGDVAMWLSMAFSGVVY. At 567–579 the chain is on the cytoplasmic side; sequence PPCRYLELRKFGR.

It belongs to the purine-cytosine permease (2.A.39) family.

It localises to the membrane. In terms of biological role, thiamine-regulated, high affinity import carrier of pyridoxine, pyridoxal and pyridoxamine. The sequence is that of Vitamin B6 transporter TPN1 (TPN1) from Saccharomyces cerevisiae (strain ATCC 204508 / S288c) (Baker's yeast).